Reading from the N-terminus, the 250-residue chain is HTH-type transcriptional regulator SarS (250 aa).

DNA-binding regions (H-T-H motif) lie at residues 53-76 (FKKI…VLVK) and 177-200 (LKDL…NLKK).

The protein belongs to the SarA family.

The protein resides in the cytoplasm. Its function is as follows. Transcriptional regulator that controls expression of some virulence factors in a cell density-dependent manner. This is HTH-type transcriptional regulator SarS (sarS) from Staphylococcus aureus (strain Mu3 / ATCC 700698).